The following is a 198-amino-acid chain: HTH-type transcriptional regulator BetI (198 aa).

Residues 8 to 68 (PIRRQQLIDA…ATMRYLISHL (61 aa)) enclose the HTH tetR-type domain. The segment at residues 31–50 (TIAQIARRAGVSNGIISHYF) is a DNA-binding region (H-T-H motif).

The protein operates within amine and polyamine biosynthesis; betaine biosynthesis via choline pathway [regulation]. In terms of biological role, repressor involved in the biosynthesis of the osmoprotectant glycine betaine. It represses transcription of the choline transporter BetT and the genes of BetAB involved in the synthesis of glycine betaine. This is HTH-type transcriptional regulator BetI from Serratia proteamaculans (strain 568).